A 233-amino-acid chain; its full sequence is Bcl-2-like protein 1 (233 aa).

A BH4 motif is present at residues 4 to 24; it reads SNRELVVDFLSYKLSQKGYSW. Residues 27-73 form a disordered region; the sequence is FSDVEENRTEAPEETEAERETPSAINGNPSWHLADSPAVNGATGHSS. Position 49 is a phosphoserine; by PLK3 (Ser-49). Ser-62 is subject to Phosphoserine; by CDK1. The BH3 signature appears at 86 to 100; it reads VKQALREAGDEFELR. The BH1 motif lies at 129–148; it reads ELFRDGVNWGRIVAFFSFGG. Residues 180–195 carry the BH2 motif; that stretch reads PWIQENGGWDTFVDLY. Residues 210–226 form a helical membrane-spanning segment; sequence FNRWFLTGMTVAGVVLL.

The protein belongs to the Bcl-2 family. Homodimer. Interacts with BAD. Interacts with PGAM5. Interacts with HEBP2. Interacts with p53/TP53 and BBC3; interaction with BBC3 disrupts the interaction with p53/TP53. Interacts with ATP5F1A and ATP5F1B; the interactions mediate the association of isoform Bcl-X(L) with the mitochondrial membrane ATP synthase F(1)F(0) ATP synthase. Interacts with VDAC1. Interacts with BCL2L11 (via BH3). Interacts with RNF183. Interacts with GIMAP3/IAN4 and GIMAP5/IAN5. Interacts with GIMAP5 and HSPA8/HSC70; the interaction between HSPA8 and BCL2L1 is impaired in the absence of GIMAP5. Interacts with isoform 4 of CLU; this interaction releases and activates BAX and promotes cell death. In terms of assembly, forms heterodimers with BAX, BAK or BCL2; heterodimerization with BAX does not seem to be required for anti-apoptotic activity. Interacts with isoform 1 of SIVA1; the interaction inhibits the anti-apoptotic activity. Interacts with IKZF3. Interacts with RTL10/BOP. Interacts with DNM1L and CLTA; DNM1L and BCL2L1 isoform BCL-X(L) may form a complex in synaptic vesicles that also contains clathrin and MFF. Interacts (via the loop between motifs BH4 and BH3) with NLRP1 (via LRR repeats), but not with NLRP2, NLRP3, NLRP4, PYCARD, nor MEFV. Interacts with BECN1. Proteolytically cleaved by caspases during apoptosis. The cleaved protein, lacking the BH4 motif, has pro-apoptotic activity. Post-translationally, phosphorylated on Ser-62 by CDK1. This phosphorylation is partial in normal mitotic cells, but complete in G2-arrested cells upon DNA-damage, thus promoting subsequent apoptosis probably by triggering caspases-mediated proteolysis. Phosphorylated by PLK3, leading to regulate the G2 checkpoint and progression to cytokinesis during mitosis. Phosphorylation at Ser-49 appears during the S phase and G2, disappears rapidly in early mitosis during prometaphase, metaphase and early anaphase, and re-appears during telophase and cytokinesis. In terms of processing, ubiquitinated by RNF183 during prolonged ER stress, leading to degradation by the proteosome. As to expression, widely expressed, with highest levels in the brain, thymus, bone marrow, and kidney. Bcl-X(L) and Bcl-X(delta-TM) expression is enhanced in B- and T-lymphocytes that have been activated.

The protein localises to the mitochondrion membrane. Its subcellular location is the nucleus membrane. It localises to the cytoplasm. It is found in the cytoskeleton. The protein resides in the microtubule organizing center. The protein localises to the centrosome. Its subcellular location is the mitochondrion inner membrane. It localises to the mitochondrion outer membrane. It is found in the mitochondrion matrix. The protein resides in the cytoplasmic vesicle. The protein localises to the secretory vesicle. Its subcellular location is the synaptic vesicle membrane. It localises to the cytosol. Potent inhibitor of cell death. Inhibits activation of caspases. Appears to regulate cell death by blocking the voltage-dependent anion channel (VDAC) by binding to it and preventing the release of the caspase activator, CYC1, from the mitochondrial membrane. Also acts as a regulator of G2 checkpoint and progression to cytokinesis during mitosis. In terms of biological role, isoform Bcl-X(L) also regulates presynaptic plasticity, including neurotransmitter release and recovery, number of axonal mitochondria as well as size and number of synaptic vesicle clusters. During synaptic stimulation, increases ATP availability from mitochondria through regulation of mitochondrial membrane ATP synthase F(1)F(0) activity and regulates endocytic vesicle retrieval in hippocampal neurons through association with DMN1L and stimulation of its GTPase activity in synaptic vesicles. May attenuate inflammation impairing NLRP1-inflammasome activation, hence CASP1 activation and IL1B release. Functionally, isoform Bcl-X(S) promotes apoptosis. This Mus musculus (Mouse) protein is Bcl-2-like protein 1 (Bcl2l1).